Here is a 289-residue protein sequence, read N- to C-terminus: Nucleotide-binding protein COPRO5265_0725 (289 aa).

9–16 is a binding site for ATP; the sequence is GLSGAGKS. 59 to 62 serves as a coordination point for GTP; that stretch reads DSRS.

This sequence belongs to the RapZ-like family.

In terms of biological role, displays ATPase and GTPase activities. This chain is Nucleotide-binding protein COPRO5265_0725, found in Coprothermobacter proteolyticus (strain ATCC 35245 / DSM 5265 / OCM 4 / BT).